The chain runs to 687 residues: DNA-directed RNA polymerase subunit beta' (687 aa).

4 residues coordinate Zn(2+): Cys76, Cys78, Cys94, and Cys97. Mg(2+) is bound by residues Asp496, Asp498, and Asp500.

Belongs to the RNA polymerase beta' chain family. RpoC1 subfamily. In terms of assembly, in plastids the minimal PEP RNA polymerase catalytic core is composed of four subunits: alpha, beta, beta', and beta''. When a (nuclear-encoded) sigma factor is associated with the core the holoenzyme is formed, which can initiate transcription. It depends on Mg(2+) as a cofactor. The cofactor is Zn(2+).

Its subcellular location is the plastid. The protein resides in the chloroplast. The catalysed reaction is RNA(n) + a ribonucleoside 5'-triphosphate = RNA(n+1) + diphosphate. Functionally, DNA-dependent RNA polymerase catalyzes the transcription of DNA into RNA using the four ribonucleoside triphosphates as substrates. The protein is DNA-directed RNA polymerase subunit beta' of Ipomoea purpurea (Common morning glory).